A 302-amino-acid chain; its full sequence is Tyrosine--tRNA ligase 2 (302 aa).

Residue Tyr-33 coordinates L-tyrosine. The 'HIGH' region motif lies at 38–47 (PTADSLHLGH). L-tyrosine contacts are provided by Tyr-160 and Gln-164. Positions 220–224 (KFGKS) match the 'KMSKS' region motif. Lys-223 contributes to the ATP binding site.

The protein belongs to the class-I aminoacyl-tRNA synthetase family. TyrS type 1 subfamily. In terms of assembly, homodimer.

Its subcellular location is the cytoplasm. The enzyme catalyses tRNA(Tyr) + L-tyrosine + ATP = L-tyrosyl-tRNA(Tyr) + AMP + diphosphate + H(+). In terms of biological role, catalyzes the attachment of tyrosine to tRNA(Tyr) in a two-step reaction: tyrosine is first activated by ATP to form Tyr-AMP and then transferred to the acceptor end of tRNA(Tyr). The chain is Tyrosine--tRNA ligase 2 (tyrS2) from Streptococcus thermophilus (strain CNRZ 1066).